Here is a 345-residue protein sequence, read N- to C-terminus: Ferritin-like-encapsulin shell fusion protein (345 aa).

The tract at residues 1 to 109 (MLSINPTLIN…INDNKKEESN (109 aa)) is ferritin-like domain. The Fe cation site is built by E31, E61, and H64. Residues 110–345 (VEYFEKLRSA…KNPEAIVVLE (236 aa)) form an encapsulin domain region.

The protein in the N-terminal section; belongs to the ferritin-like superfamily. In the C-terminal section; belongs to the encapsulin family. Family 1 subfamily. 180 monomers assemble into 12 pentamers and 20 hexamers which further assemble into an icosahedral particle about 36.6 nm in diameter. The N-terminal domain (residues 1-99) crystallizes as 3 decamers.

The protein resides in the encapsulin nanocompartment. The catalysed reaction is 4 Fe(2+) + O2 + 4 H(+) = 4 Fe(3+) + 2 H2O. The ferroxidase activity is inhibited by zinc. In terms of biological role, fusion of the shell and cargo protein of a type 1 encapsulin nanocompartment. The nanocompartment is probably involved in iron storage. Expression in E.coli generates spherical particles (PfSPs) about 30 nm in diameter. The purified N-terminus has ferroxidase activity. This Pyrococcus furiosus (strain ATCC 43587 / DSM 3638 / JCM 8422 / Vc1) protein is Ferritin-like-encapsulin shell fusion protein.